A 121-amino-acid polypeptide reads, in one-letter code: Large ribosomal subunit protein uL24 (121 aa).

A disordered region spans residues 1–23 (MVRIESSQPRKQRKARYDAPSHM).

This sequence belongs to the universal ribosomal protein uL24 family. In terms of assembly, part of the 50S ribosomal subunit.

In terms of biological role, one of two assembly initiator proteins, it binds directly to the 5'-end of the 23S rRNA, where it nucleates assembly of the 50S subunit. Its function is as follows. Located at the polypeptide exit tunnel on the outside of the subunit. The sequence is that of Large ribosomal subunit protein uL24 from Methanoregula boonei (strain DSM 21154 / JCM 14090 / 6A8).